The sequence spans 142 residues: Lutropin subunit beta (142 aa).

A signal peptide spans 1 to 21; that stretch reads MEMLQGLLLLWLLLNVGGVWT. 6 disulfide bridges follow: C30/C78, C44/C93, C47/C131, C55/C109, C59/C111, and C114/C121. N34 carries N-linked (GlcNAc...) asparagine glycosylation.

The protein belongs to the glycoprotein hormones subunit beta family. Heterodimer of a common alpha chain and a unique beta chain which confers biological specificity to thyrotropin, lutropin, follitropin and gonadotropin.

Its subcellular location is the secreted. Its function is as follows. Promotes spermatogenesis and ovulation by stimulating the testes and ovaries to synthesize steroids. In Panthera tigris altaica (Siberian tiger), this protein is Lutropin subunit beta (LHB).